A 192-amino-acid polypeptide reads, in one-letter code: NADH-ubiquinone oxidoreductase subunit 9 (192 aa).

This sequence belongs to the complex I 30 kDa subunit family. In terms of assembly, complex I is composed of about 30 different subunits.

It is found in the mitochondrion inner membrane. The catalysed reaction is a ubiquinone + NADH + 5 H(+)(in) = a ubiquinol + NAD(+) + 4 H(+)(out). Core subunit of the mitochondrial membrane respiratory chain NADH dehydrogenase (Complex I) that is believed to belong to the minimal assembly required for catalysis. Complex I functions in the transfer of electrons from NADH to the respiratory chain. The immediate electron acceptor for the enzyme is believed to be ubiquinone. This is NADH-ubiquinone oxidoreductase subunit 9 (NAD9) from Prototheca wickerhamii.